The chain runs to 235 residues: Triosephosphate isomerase (235 aa).

Asn-7–Lys-9 provides a ligand contact to substrate. His-92 serves as the catalytic Electrophile. Glu-161 functions as the Proton acceptor in the catalytic mechanism. Gly-167 and Ser-197 together coordinate substrate.

The protein belongs to the triosephosphate isomerase family. Homodimer.

Its subcellular location is the cytoplasm. The enzyme catalyses D-glyceraldehyde 3-phosphate = dihydroxyacetone phosphate. It participates in carbohydrate biosynthesis; gluconeogenesis. It functions in the pathway carbohydrate degradation; glycolysis; D-glyceraldehyde 3-phosphate from glycerone phosphate: step 1/1. Functionally, involved in the gluconeogenesis. Catalyzes stereospecifically the conversion of dihydroxyacetone phosphate (DHAP) to D-glyceraldehyde-3-phosphate (G3P). This Helicobacter hepaticus (strain ATCC 51449 / 3B1) protein is Triosephosphate isomerase.